We begin with the raw amino-acid sequence, 414 residues long: Gamma-glutamyl phosphate reductase (414 aa).

The protein belongs to the gamma-glutamyl phosphate reductase family.

The protein resides in the cytoplasm. The enzyme catalyses L-glutamate 5-semialdehyde + phosphate + NADP(+) = L-glutamyl 5-phosphate + NADPH + H(+). It functions in the pathway amino-acid biosynthesis; L-proline biosynthesis; L-glutamate 5-semialdehyde from L-glutamate: step 2/2. In terms of biological role, catalyzes the NADPH-dependent reduction of L-glutamate 5-phosphate into L-glutamate 5-semialdehyde and phosphate. The product spontaneously undergoes cyclization to form 1-pyrroline-5-carboxylate. This is Gamma-glutamyl phosphate reductase from Xanthomonas oryzae pv. oryzae (strain KACC10331 / KXO85).